The chain runs to 302 residues: CASP-like protein 4A2 (302 aa).

Residues 1-13 show a composition bias toward polar residues; sequence MALQAQQQATPSP. The tract at residues 1–134 is disordered; the sequence is MALQAQQQAT…APPPHAQVRS (134 aa). The Cytoplasmic segment spans residues 1–154; the sequence is MALQAQQQAT…RKRRAAVMQR (154 aa). A compositionally biased stretch (low complexity) spans 40–60; that stretch reads VVVASTHHAAAAARYVPPRAT. Residues 99 to 129 show a composition bias toward pro residues; that stretch reads KTPPPAPPLPAAPPPPPAASPAPAPRAPPPH. A helical membrane pass occupies residues 155 to 175; that stretch reads AALLARAAAAGLCLAALAVLA. Topologically, residues 176–197 are extracellular; that stretch reads SDTRRGWARDSYSNYAQFRYSE. The helical transmembrane segment at 198–218 threads the bilayer; it reads AVNVVGFLYSVFQFVALAELM. Topologically, residues 219–238 are cytoplasmic; sequence RRNKHLIPHPKRDLFDFTMD. A helical transmembrane segment spans residues 239-256; sequence QVVAYLLISSSSSATARA. Over 257 to 273 the chain is Extracellular; it reads SDLIENWGSDSFPSMAN. Residues 274-294 traverse the membrane as a helical segment; it reads GSIAISFVAFVVFAICSLISA. The Cytoplasmic segment spans residues 295-302; it reads YNLFRRDM.

Belongs to the Casparian strip membrane proteins (CASP) family. Homodimer and heterodimers.

Its subcellular location is the cell membrane. The sequence is that of CASP-like protein 4A2 from Zea mays (Maize).